A 451-amino-acid chain; its full sequence is tRNA-2-methylthio-N(6)-dimethylallyladenosine synthase (451 aa).

The region spanning 11 to 127 (RHYHITTFGC…LEDLLQQVFD (117 aa)) is the MTTase N-terminal domain. [4Fe-4S] cluster-binding residues include cysteine 20, cysteine 56, cysteine 90, cysteine 162, cysteine 166, and cysteine 169. A Radical SAM core domain is found at 148-385 (RDSTITAWVN…NHLVAQKAAE (238 aa)). The 64-residue stretch at 388–451 (QRYLGRIEEV…RAFSLTGEIV (64 aa)) folds into the TRAM domain.

It belongs to the methylthiotransferase family. MiaB subfamily. Monomer. Requires [4Fe-4S] cluster as cofactor.

The protein resides in the cytoplasm. The catalysed reaction is N(6)-dimethylallyladenosine(37) in tRNA + (sulfur carrier)-SH + AH2 + 2 S-adenosyl-L-methionine = 2-methylsulfanyl-N(6)-dimethylallyladenosine(37) in tRNA + (sulfur carrier)-H + 5'-deoxyadenosine + L-methionine + A + S-adenosyl-L-homocysteine + 2 H(+). Functionally, catalyzes the methylthiolation of N6-(dimethylallyl)adenosine (i(6)A), leading to the formation of 2-methylthio-N6-(dimethylallyl)adenosine (ms(2)i(6)A) at position 37 in tRNAs that read codons beginning with uridine. The protein is tRNA-2-methylthio-N(6)-dimethylallyladenosine synthase of Rippkaea orientalis (strain PCC 8801 / RF-1) (Cyanothece sp. (strain PCC 8801)).